A 197-amino-acid polypeptide reads, in one-letter code: Putative WUSCHEL-related homeobox 10 (197 aa).

The homeobox; WUS-type DNA-binding region spans 75–139 (STRPRWTPTT…NRRARSKRKQ (65 aa)). The interval 132–168 (RARSKRKQPPTTTITSSQADDAAVTTTEERGRCGDDS) is disordered. Polar residues predominate over residues 140–150 (PPTTTITSSQA).

The protein belongs to the WUS homeobox family.

The protein localises to the nucleus. Functionally, potential transcription factor that plays a central role during developmental processes. In Arabidopsis thaliana (Mouse-ear cress), this protein is Putative WUSCHEL-related homeobox 10 (WOX10).